The following is a 76-amino-acid chain: Small ribosomal subunit protein bS18 (76 aa).

The protein belongs to the bacterial ribosomal protein bS18 family. As to quaternary structure, part of the 30S ribosomal subunit. Forms a tight heterodimer with protein bS6.

In terms of biological role, binds as a heterodimer with protein bS6 to the central domain of the 16S rRNA, where it helps stabilize the platform of the 30S subunit. The protein is Small ribosomal subunit protein bS18 of Alcanivorax borkumensis (strain ATCC 700651 / DSM 11573 / NCIMB 13689 / SK2).